The primary structure comprises 392 residues: Retrovirus-related Pol polyprotein from type-1 retrotransposable element R1 4 (392 aa).

Positions 1–230 constitute a Reverse transcriptase domain; the sequence is PFADDLAVLV…GGVVIRRRPE (230 aa). Residues 231 to 392 are nucleic acid-binding endonuclease; the sequence is GLKENYNRVL…DEGLSSESEE (162 aa).

It catalyses the reaction DNA(n) + a 2'-deoxyribonucleoside 5'-triphosphate = DNA(n+1) + diphosphate. This Nasonia vitripennis (Parasitic wasp) protein is Retrovirus-related Pol polyprotein from type-1 retrotransposable element R1 4.